The following is a 252-amino-acid chain: HTH-type transcriptional regulator XynR (252 aa).

Residues 4-66 form the HTH iclR-type domain; sequence IQSVERALQI…PENGKYRLGM (63 aa). Positions 25-45 form a DNA-binding region, H-T-H motif; the sequence is KITDISKLMGLSKSTLHSLLK. Residues 81-250 enclose the IclR-ED domain; it reads IRQKAKGWLT…GLALSRALGY (170 aa).

With respect to regulation, activity may be controlled by xylonate. Functionally, involved in regulation of xylonate catabolism. Represses the expression of both yagA and yagEF operons. Binds mainly at a single site within the spacer of the bidirectional transcription units yagA and yagEF. This chain is HTH-type transcriptional regulator XynR, found in Escherichia coli (strain K12).